A 376-amino-acid polypeptide reads, in one-letter code: Probable tRNA sulfurtransferase (376 aa).

Positions 51-152 constitute a THUMP domain; the sequence is EENLKNLKYV…KNSVYVFDKS (102 aa). Residues 170 to 171, 195 to 196, Arg252, Gly274, and Gln283 contribute to the ATP site; these read LI and TF.

This sequence belongs to the ThiI family.

The protein resides in the cytoplasm. It catalyses the reaction [ThiI sulfur-carrier protein]-S-sulfanyl-L-cysteine + a uridine in tRNA + 2 reduced [2Fe-2S]-[ferredoxin] + ATP + H(+) = [ThiI sulfur-carrier protein]-L-cysteine + a 4-thiouridine in tRNA + 2 oxidized [2Fe-2S]-[ferredoxin] + AMP + diphosphate. It carries out the reaction [ThiS sulfur-carrier protein]-C-terminal Gly-Gly-AMP + S-sulfanyl-L-cysteinyl-[cysteine desulfurase] + AH2 = [ThiS sulfur-carrier protein]-C-terminal-Gly-aminoethanethioate + L-cysteinyl-[cysteine desulfurase] + A + AMP + 2 H(+). It participates in cofactor biosynthesis; thiamine diphosphate biosynthesis. In terms of biological role, catalyzes the ATP-dependent transfer of a sulfur to tRNA to produce 4-thiouridine in position 8 of tRNAs, which functions as a near-UV photosensor. Also catalyzes the transfer of sulfur to the sulfur carrier protein ThiS, forming ThiS-thiocarboxylate. This is a step in the synthesis of thiazole, in the thiamine biosynthesis pathway. The sulfur is donated as persulfide by IscS. The chain is Probable tRNA sulfurtransferase from Mycoplasmopsis synoviae (strain 53) (Mycoplasma synoviae).